A 223-amino-acid chain; its full sequence is DNA mismatch repair protein MutH (223 aa).

Belongs to the MutH family.

The protein localises to the cytoplasm. Functionally, sequence-specific endonuclease that cleaves unmethylated GATC sequences. It is involved in DNA mismatch repair. This is DNA mismatch repair protein MutH from Shewanella sp. (strain MR-7).